A 345-amino-acid chain; its full sequence is D-erythrose-4-phosphate dehydrogenase (345 aa).

Residue 11 to 12 (RI) participates in NAD(+) binding. Substrate-binding positions include 158–160 (SCT), arginine 204, 217–218 (TK), and arginine 240. Cysteine 159 serves as the catalytic Nucleophile. An NAD(+)-binding site is contributed by asparagine 322.

It belongs to the glyceraldehyde-3-phosphate dehydrogenase family. Epd subfamily. Homotetramer.

Its subcellular location is the cytoplasm. The catalysed reaction is D-erythrose 4-phosphate + NAD(+) + H2O = 4-phospho-D-erythronate + NADH + 2 H(+). It functions in the pathway cofactor biosynthesis; pyridoxine 5'-phosphate biosynthesis; pyridoxine 5'-phosphate from D-erythrose 4-phosphate: step 1/5. Catalyzes the NAD-dependent conversion of D-erythrose 4-phosphate to 4-phosphoerythronate. The sequence is that of D-erythrose-4-phosphate dehydrogenase from Vibrio parahaemolyticus serotype O3:K6 (strain RIMD 2210633).